The primary structure comprises 189 residues: GTPase HRas (189 aa).

Position 10-17 (10-17) interacts with GTP; the sequence is GAKGVGKS. Residues 32 to 40 carry the Effector region motif; that stretch reads YDPTIEDSY. Residues 57–61 and 116–119 each bind GTP; these read DTAGQ and NKCD. S-palmitoyl cysteine; by host attachment occurs at residues cysteine 181 and cysteine 184. The residue at position 186 (cysteine 186) is a Cysteine methyl ester; by host. Cysteine 186 carries S-farnesyl cysteine; by host lipidation. Residues 187–189 constitute a propeptide, removed in mature form; that stretch reads VLS.

This sequence belongs to the small GTPase superfamily. Ras family.

It is found in the host cell membrane. It carries out the reaction GTP + H2O = GDP + phosphate + H(+). Its activity is regulated as follows. Alternates between an inactive form bound to GDP and an active form bound to GTP. Activated by a guanine nucleotide-exchange factor (GEF) and inactivated by a GTPase-activating protein (GAP). The polypeptide is GTPase HRas (H-RAS) (Moloney murine sarcoma virus (MoMSV)).